The primary structure comprises 351 residues: DNA polymerase IV (351 aa).

The 182-residue stretch at Ile-4–Gly-185 folds into the UmuC domain. Residues Asp-8 and Asp-103 each coordinate Mg(2+). The active site involves Glu-104.

Belongs to the DNA polymerase type-Y family. Monomer. Requires Mg(2+) as cofactor.

The protein resides in the cytoplasm. The catalysed reaction is DNA(n) + a 2'-deoxyribonucleoside 5'-triphosphate = DNA(n+1) + diphosphate. Poorly processive, error-prone DNA polymerase involved in untargeted mutagenesis. Copies undamaged DNA at stalled replication forks, which arise in vivo from mismatched or misaligned primer ends. These misaligned primers can be extended by PolIV. Exhibits no 3'-5' exonuclease (proofreading) activity. May be involved in translesional synthesis, in conjunction with the beta clamp from PolIII. The polypeptide is DNA polymerase IV (Shigella dysenteriae serotype 1 (strain Sd197)).